Reading from the N-terminus, the 154-residue chain is Large ribosomal subunit protein uL30 (154 aa).

The interval 122–141 (RGGHDGIKTPASDGGQLGKH) is disordered.

The protein belongs to the universal ribosomal protein uL30 family. In terms of assembly, part of the 50S ribosomal subunit.

This is Large ribosomal subunit protein uL30 from Halobacterium salinarum (strain ATCC 29341 / DSM 671 / R1).